We begin with the raw amino-acid sequence, 342 residues long: Glucokinase (342 aa).

An ATP-binding site is contributed by 7 to 12; it reads GDIGGT.

This sequence belongs to the bacterial glucokinase family.

It is found in the cytoplasm. It catalyses the reaction D-glucose + ATP = D-glucose 6-phosphate + ADP + H(+). This Trichormus variabilis (strain ATCC 29413 / PCC 7937) (Anabaena variabilis) protein is Glucokinase.